Here is a 360-residue protein sequence, read N- to C-terminus: Carbamoyl phosphate synthase small chain (360 aa).

A CPSase region spans residues 1 to 169 (MTKRLLILED…TKTAYPAPGI (169 aa)). L-glutamine is bound by residues S46, G220, and G222. The region spanning 172 to 358 (NIVLVDFGLK…LEMIDSWRCT (187 aa)) is the Glutamine amidotransferase type-1 domain. The active-site Nucleophile is C247. 5 residues coordinate L-glutamine: M248, Q251, N289, G291, and Y292. Residues H331 and D333 contribute to the active site.

This sequence belongs to the CarA family. As to quaternary structure, composed of two chains; the small (or glutamine) chain promotes the hydrolysis of glutamine to ammonia, which is used by the large (or ammonia) chain to synthesize carbamoyl phosphate. Tetramer of heterodimers (alpha,beta)4.

It carries out the reaction hydrogencarbonate + L-glutamine + 2 ATP + H2O = carbamoyl phosphate + L-glutamate + 2 ADP + phosphate + 2 H(+). The catalysed reaction is L-glutamine + H2O = L-glutamate + NH4(+). The protein operates within amino-acid biosynthesis; L-arginine biosynthesis; carbamoyl phosphate from bicarbonate: step 1/1. It participates in pyrimidine metabolism; UMP biosynthesis via de novo pathway; (S)-dihydroorotate from bicarbonate: step 1/3. Functionally, small subunit of the glutamine-dependent carbamoyl phosphate synthetase (CPSase). CPSase catalyzes the formation of carbamoyl phosphate from the ammonia moiety of glutamine, carbonate, and phosphate donated by ATP, constituting the first step of 2 biosynthetic pathways, one leading to arginine and/or urea and the other to pyrimidine nucleotides. The small subunit (glutamine amidotransferase) binds and cleaves glutamine to supply the large subunit with the substrate ammonia. This is Carbamoyl phosphate synthase small chain from Streptococcus pyogenes serotype M3 (strain SSI-1).